Consider the following 425-residue polypeptide: MSRNEALFEASQKVIPGGVNSPVRAFRSVGGTPVFFSRARGSRVWDADGREYIDYVGSWGPAILGHAHPGTVKAVQDAAANGLSFGAPSEAELTIATRITELLPSVEKVRLVSSGTEATMSAIRLARGFTGRSKFIKFEGCYHGHADFLLVKAGSGALTFGNPTSAGVPPEVAAQTIVLDYNDVAGLERTFAEIGDEIACIIVEPFAGNMNLVKPSAEFMAAMRRLCDEHGALLIFDEVMTGFRVDLGCAQKLLGIRPDLTTLGKVIGGGMPVGAFGGRADVMDALAPVGPVYQAGTLSGNPVAVAAGLATLASVSEPGFYPALAARTEKLVKGLTAAAREAGVTFCADSVGGMFGLYFAAEPPASFAEVMRCDKEKFNRFFHAMLDHGVYLAPSAFEAGFVSAAHSDADIDATVAAAREVFRTL.

Lys-265 is modified (N6-(pyridoxal phosphate)lysine).

This sequence belongs to the class-III pyridoxal-phosphate-dependent aminotransferase family. HemL subfamily. As to quaternary structure, homodimer. The cofactor is pyridoxal 5'-phosphate.

Its subcellular location is the cytoplasm. It catalyses the reaction (S)-4-amino-5-oxopentanoate = 5-aminolevulinate. It functions in the pathway porphyrin-containing compound metabolism; protoporphyrin-IX biosynthesis; 5-aminolevulinate from L-glutamyl-tRNA(Glu): step 2/2. The chain is Glutamate-1-semialdehyde 2,1-aminomutase from Thiobacillus denitrificans (strain ATCC 25259 / T1).